The following is a 288-amino-acid chain: Acetyl-coenzyme A carboxylase carboxyl transferase subunit beta (288 aa).

The region spanning 32-288 (LLLICPKCKK…ILMLHNVEAR (257 aa)) is the CoA carboxyltransferase N-terminal domain. Zn(2+) is bound by residues cysteine 36, cysteine 39, cysteine 55, and cysteine 58. The C4-type zinc finger occupies 36–58 (CPKCKKTLLKSELADNLDVCREC).

It belongs to the AccD/PCCB family. Acetyl-CoA carboxylase is a heterohexamer composed of biotin carboxyl carrier protein (AccB), biotin carboxylase (AccC) and two subunits each of ACCase subunit alpha (AccA) and ACCase subunit beta (AccD). It depends on Zn(2+) as a cofactor.

The protein resides in the cytoplasm. The enzyme catalyses N(6)-carboxybiotinyl-L-lysyl-[protein] + acetyl-CoA = N(6)-biotinyl-L-lysyl-[protein] + malonyl-CoA. The protein operates within lipid metabolism; malonyl-CoA biosynthesis; malonyl-CoA from acetyl-CoA: step 1/1. Functionally, component of the acetyl coenzyme A carboxylase (ACC) complex. Biotin carboxylase (BC) catalyzes the carboxylation of biotin on its carrier protein (BCCP) and then the CO(2) group is transferred by the transcarboxylase to acetyl-CoA to form malonyl-CoA. The chain is Acetyl-coenzyme A carboxylase carboxyl transferase subunit beta from Ruminiclostridium cellulolyticum (strain ATCC 35319 / DSM 5812 / JCM 6584 / H10) (Clostridium cellulolyticum).